Here is a 102-residue protein sequence, read N- to C-terminus: Integration host factor subunit beta (102 aa).

The protein belongs to the bacterial histone-like protein family. Heterodimer of an alpha and a beta chain.

This protein is one of the two subunits of integration host factor, a specific DNA-binding protein that functions in genetic recombination as well as in transcriptional and translational control. The chain is Integration host factor subunit beta from Rhodopseudomonas palustris (strain BisA53).